A 412-amino-acid polypeptide reads, in one-letter code: Polyferredoxin protein MvhB (412 aa).

4Fe-4S ferredoxin-type domains lie at 2 to 29 (IIVNKEDCIRCGACQGTCPTAAIEVTPE), 30 to 57 (DVIYCDICGGEPKCVDICPTGALKLEDL), 67 to 96 (GRIVFNPDKCNECGDCVEVCPPQILKLDEG), 97 to 127 (KVKKVPLQGFCVMCQKCVDICPVGVIGVEGI), 138 to 166 (EGPIFIADCVGCGMCVPECPVDAITLDKV), 168 to 197 (GVIEIDEDTCIKCGVCAQTCPWNAVYISGR), 207 to 236 (KKFELDEDACIGCNTCVEACPGDFIVPRTS), 238 to 266 (LTVELPAICTACGLCEQLCPVDAIDLEVE), 276 to 305 (EGLVWDEEKCDFIGACANICPNDAIRVVTK), 314 to 345 (EKVDEEPSFAMCTRCGACTVACPKGALSLVDM), 357 to 386 (KRVQYNPALCDQCGDCIEACPYDMLKLTDE), and 385 to 412 (DEKVPLKGFCILCDQCIPACPKGALSLK). Positions 9, 12, 15, and 19 each coordinate [4Fe-4S] cluster. Residues C76, C79, C82, C86, C107, C110, C113, C117, C146, C149, C152, C156, C177, C180, C183, C187, C216, C219, C222, C226, C246, C249, C252, and C256 each contribute to the [4Fe-4S] cluster site. Positions 325, 328, 331, 335, 366, 369, 372, 376, 394, 397, 400, and 404 each coordinate [4Fe-4S] cluster.

[4Fe-4S] cluster is required as a cofactor.

This is Polyferredoxin protein MvhB (mvhB) from Methanothermobacter thermautotrophicus (strain ATCC 29096 / DSM 1053 / JCM 10044 / NBRC 100330 / Delta H) (Methanobacterium thermoautotrophicum).